We begin with the raw amino-acid sequence, 52 residues long: Thiocillin (52 aa).

Residues 1–38 (MSEIKKALNTLEIEDFDAIEMVDVDAMPENEALEIMGA) constitute a propeptide that is removed on maturation. The segment at residues 39–40 (SC) is a cross-link (thiazole-4-carboxylic acid (Ser-Cys)). The pyridine-2,5-dicarboxylic acid (Ser-Cys) (with S-48) cross-link spans 39 to 47 (SCTTCVCTC). The pyridine-2,5-dicarboxylic acid (Ser-Ser) (with C-47) cross-link spans 39-48 (SCTTCVCTCS). Thr-42 carries the post-translational modification (Z)-2,3-didehydrobutyrine. The segment at residues 42–43 (TC) is a cross-link (thiazole-4-carboxylic acid (Thr-Cys)). Val-44 carries the post-translational modification 3-hydroxyvaline (Val); partial. The segment at residues 44–45 (VC) is a cross-link (thiazole-4-carboxylic acid (Val-Cys)). The residue at position 46 (Thr-46) is an O-methylthreonine; partial. Residues 46–47 (TC) constitute a cross-link (thiazole-4-carboxylic acid (Thr-Cys)). Residues 48–49 (SC) constitute a cross-link (thiazole-4-carboxylic acid (Ser-Cys)). Residues 49 to 50 (CC) constitute a cross-link (thiazole-4-carboxylic acid (Cys-Cys)). (Z)-2,3-didehydrobutyrine is present on Thr-51. Thr-52 carries the 1-amino-2-propanone; alternate modification. The residue at position 52 (Thr-52) is a Decarboxylated threonine; alternate.

This sequence belongs to the thiocillin family. Post-translationally, maturation of thiazole and oxazole containing antibiotics involves the enzymatic condensation of a Cys, Ser or Thr with the alpha-carbonyl of the preceding amino acid to form a thioether or ether bond, then dehydration to form a double bond with the alpha-amino nitrogen. Thiazoline or oxazoline ring are dehydrogenated to form thiazole or oxazole rings. In terms of processing, maturation of pyridinyl containing antibiotics involves the cross-linking of a Ser and a Cys-Ser pair usually separated by 7 or 8 residues along the peptide chain. The Ser residues are dehydrated to didehydroalanines, then bonded between their beta carbons. The alpha carbonyl of the Cys condenses with alpha carbon of the first Ser to form a pyridinyl ring. The ring may be multiply dehydrogenated to form a pyridine ring with loss of the amino nitrogen of the first Ser. The 8 possible modification isomers, differing in the presence of modifications at three positions, have been characterized in PubMed:19196969. Val-44 is modified to 3-hydroxyvaline in forms thiocillin I, thiocillin II, YM-266183, and YM-266184. Thr-46 is modified to O-methylthreonine in forms thiocillin II, thiocillin III, thiocillin IV, and YM-266184. Thr-52 is decarboxylated to (R)-1-aminopropan-2-ol in forms micrococcin P1, thiocillin I, thiocillin II, and thiocillin III. Thr-52 is decarboxylated and oxidized to 1-amino-2-propanone in forms micrococcin P2, YM-266183, YM-266184. and thiocillin IV. Post-translationally, the structure of 2,3-didehydrobutyrines is not discussed in PubMed:19196969. However, in Fig. 3 the residues are diagrammed as Z-isomers.

The protein localises to the secreted. Has bacteriocidal activity against Gram-positive bacteria, but not against Gram-negative bacteria. Inhibits bacterial protein biosynthesis by acting on the elongation factor Tu (EF-Tu). This is Thiocillin from Bacillus cereus (strain ATCC 14579 / DSM 31 / CCUG 7414 / JCM 2152 / NBRC 15305 / NCIMB 9373 / NCTC 2599 / NRRL B-3711).